We begin with the raw amino-acid sequence, 348 residues long: Signal recognition particle receptor FtsY (348 aa).

Residues 143–150, 225–229, and 289–292 contribute to the GTP site; these read GVNGVGKT, DTSGR, and TKMD.

This sequence belongs to the GTP-binding SRP family. FtsY subfamily. Part of the signal recognition particle protein translocation system, which is composed of SRP and FtsY.

It is found in the cell membrane. Its subcellular location is the cytoplasm. It carries out the reaction GTP + H2O = GDP + phosphate + H(+). Involved in targeting and insertion of nascent membrane proteins into the cytoplasmic membrane. Acts as a receptor for the complex formed by the signal recognition particle (SRP) and the ribosome-nascent chain (RNC). The chain is Signal recognition particle receptor FtsY from Mycoplasma pneumoniae (strain ATCC 29342 / M129 / Subtype 1) (Mycoplasmoides pneumoniae).